A 456-amino-acid chain; its full sequence is 5-hydroxytryptamine receptor 3E (456 aa).

The signal sequence occupies residues 1 to 25 (MEGSWFHRKRFSFYLLLGFLLQGRG). Over 26-248 (VTFTINCSGF…FYVAIRRRPS (223 aa)) the chain is Extracellular. Cys162 and Cys176 form a disulfide bridge. A glycan (N-linked (GlcNAc...) asparagine) is linked at Asn175. A helical transmembrane segment spans residues 249–269 (LYVINLLVPSGFLVAIDALSF). Over 270 to 282 (YLPVKSGNRVPFK) the chain is Cytoplasmic. The helical transmembrane segment at 283 to 303 (ITLLLGYNVFLLMMSDLLPTS) threads the bilayer. The Extracellular segment spans residues 304-307 (GTPL). A helical transmembrane segment spans residues 308–328 (IGVYFALCLSLMVGSLLETIF). The Cytoplasmic portion of the chain corresponds to 329-433 (ITHLLHVATT…WLQFSHAMDA (105 aa)). The HA-stretch; determines single-channel conductance in 5-HT3 receptors stretch occupies residues 401-432 (TGGSEWTRAQREHEAQKQHSVELWLQFSHAMD). Residues 434 to 454 (MLFRLYLLFMASSIITVICLW) traverse the membrane as a helical segment. The Extracellular portion of the chain corresponds to 455–456 (NT).

Belongs to the ligand-gated ion channel (TC 1.A.9) family. 5-hydroxytryptamine receptor (TC 1.A.9.2) subfamily. HTR3E sub-subfamily. As to quaternary structure, forms homopentameric as well as heteropentameric serotonin-activated cation-selective channel complexes with HTR3A. The homomeric complex is not functional. Heteropentameric complexes display properties which resemble that of neuronal serotonin-activated channels in vivo. In terms of tissue distribution, expressed in adult colon and intestine.

The protein localises to the postsynaptic cell membrane. Its subcellular location is the cell membrane. It carries out the reaction Na(+)(in) = Na(+)(out). The enzyme catalyses K(+)(in) = K(+)(out). It catalyses the reaction Ca(2+)(in) = Ca(2+)(out). In terms of biological role, forms serotonin (5-hydroxytryptamine/5-HT3)-activated cation-selective channel complexes, which when activated cause fast, depolarizing responses in neurons. The chain is 5-hydroxytryptamine receptor 3E from Homo sapiens (Human).